Reading from the N-terminus, the 233-residue chain is uncharacterized protein (233 aa).

Helical transmembrane passes span 7–27, 36–56, 62–82, 119–139, 159–179, and 188–208; these read VPIF…LLAY, YEFE…ILIP, MFVL…KYLA, LIIA…AILM, PLYP…VGLV, and ILLA…APHI.

It is found in the cell membrane. This is an uncharacterized protein from Methanocaldococcus jannaschii (strain ATCC 43067 / DSM 2661 / JAL-1 / JCM 10045 / NBRC 100440) (Methanococcus jannaschii).